The primary structure comprises 469 residues: Mitochondrial distribution and morphology protein 10 (469 aa).

Belongs to the MDM10 family. Component of the ER-mitochondria encounter structure (ERMES) or MDM complex, composed of MMM1, MDM10, MDM12 and MDM34. Associates with the mitochondrial outer membrane sorting assembly machinery SAM(core) complex.

The protein localises to the mitochondrion outer membrane. Functionally, component of the ERMES/MDM complex, which serves as a molecular tether to connect the endoplasmic reticulum and mitochondria. Components of this complex are involved in the control of mitochondrial shape and protein biogenesis and may function in phospholipid exchange. MDM10 is involved in the late assembly steps of the general translocase of the mitochondrial outer membrane (TOM complex). Functions in the TOM40-specific route of the assembly of outer membrane beta-barrel proteins, including the association of TOM40 with the receptor TOM22 and small TOM proteins. Can associate with the SAM(core) complex as well as the MDM12-MMM1 complex, both involved in late steps of the major beta-barrel assembly pathway, that is responsible for biogenesis of all outer membrane beta-barrel proteins. May act as a switch that shuttles between both complexes and channels precursor proteins into the TOM40-specific pathway. Plays a role in mitochondrial morphology and in the inheritance of mitochondria. This Scheffersomyces stipitis (strain ATCC 58785 / CBS 6054 / NBRC 10063 / NRRL Y-11545) (Yeast) protein is Mitochondrial distribution and morphology protein 10.